The primary structure comprises 614 residues: DNA mismatch repair protein MutL (614 aa).

It belongs to the DNA mismatch repair MutL/HexB family.

Its function is as follows. This protein is involved in the repair of mismatches in DNA. It is required for dam-dependent methyl-directed DNA mismatch repair. May act as a 'molecular matchmaker', a protein that promotes the formation of a stable complex between two or more DNA-binding proteins in an ATP-dependent manner without itself being part of a final effector complex. The polypeptide is DNA mismatch repair protein MutL (Thermoanaerobacter pseudethanolicus (strain ATCC 33223 / 39E) (Clostridium thermohydrosulfuricum)).